The chain runs to 392 residues: Formate-dependent phosphoribosylglycinamide formyltransferase (392 aa).

Residues Glu12–Leu13 and Glu72 each bind N(1)-(5-phospho-beta-D-ribosyl)glycinamide. ATP is bound by residues Arg104, Lys145, Ser150–Gln155, Glu185–Val188, and Glu193. The 192-residue stretch at Asp109–Leu300 folds into the ATP-grasp domain. 2 residues coordinate Mg(2+): Glu258 and Glu270. Residues Asp277, Lys348, and Arg355–Arg356 each bind N(1)-(5-phospho-beta-D-ribosyl)glycinamide.

The protein belongs to the PurK/PurT family. Homodimer.

It carries out the reaction N(1)-(5-phospho-beta-D-ribosyl)glycinamide + formate + ATP = N(2)-formyl-N(1)-(5-phospho-beta-D-ribosyl)glycinamide + ADP + phosphate + H(+). The protein operates within purine metabolism; IMP biosynthesis via de novo pathway; N(2)-formyl-N(1)-(5-phospho-D-ribosyl)glycinamide from N(1)-(5-phospho-D-ribosyl)glycinamide (formate route): step 1/1. Involved in the de novo purine biosynthesis. Catalyzes the transfer of formate to 5-phospho-ribosyl-glycinamide (GAR), producing 5-phospho-ribosyl-N-formylglycinamide (FGAR). Formate is provided by PurU via hydrolysis of 10-formyl-tetrahydrofolate. This chain is Formate-dependent phosphoribosylglycinamide formyltransferase, found in Chlorobaculum tepidum (strain ATCC 49652 / DSM 12025 / NBRC 103806 / TLS) (Chlorobium tepidum).